A 130-amino-acid chain; its full sequence is Large ribosomal subunit protein bL12 (130 aa).

Belongs to the bacterial ribosomal protein bL12 family. Homodimer. Part of the ribosomal stalk of the 50S ribosomal subunit. Forms a multimeric L10(L12)X complex, where L10 forms an elongated spine to which 2 to 4 L12 dimers bind in a sequential fashion. Binds GTP-bound translation factors.

Functionally, forms part of the ribosomal stalk which helps the ribosome interact with GTP-bound translation factors. Is thus essential for accurate translation. This Herpetosiphon aurantiacus (strain ATCC 23779 / DSM 785 / 114-95) protein is Large ribosomal subunit protein bL12.